We begin with the raw amino-acid sequence, 364 residues long: Oxidized polyvinyl alcohol hydrolase (364 aa).

An N-terminal signal peptide occupies residues 1–34; the sequence is MFKPVVKSRSSRSFCYLAGCLAMVAATLSSTAQA. Catalysis depends on charge relay system residues Ser190 and Ser293.

Belongs to the peptidase S9A family. In terms of assembly, monomer.

It is found in the periplasm. The enzyme catalyses nonane-4,6-dione + H2O = pentan-2-one + butanoate + H(+). In terms of biological role, catalyzes the hydrolysis of 4,6-nonanedione, a beta-diketone compound. Also mediates hydrolysis of oxidized polyvinyl alcohol (PVA) in the second step in the degradation of polyvinyl alcohol. Not active toward the monoketone structure. The polypeptide is Oxidized polyvinyl alcohol hydrolase (oph) (Sphingopyxis sp. (strain 113P3)).